The sequence spans 221 residues: Urease accessory protein UreF (221 aa).

This sequence belongs to the UreF family. As to quaternary structure, ureD, UreF and UreG form a complex that acts as a GTP-hydrolysis-dependent molecular chaperone, activating the urease apoprotein by helping to assemble the nickel containing metallocenter of UreC. The UreE protein probably delivers the nickel.

The protein resides in the cytoplasm. Required for maturation of urease via the functional incorporation of the urease nickel metallocenter. This chain is Urease accessory protein UreF, found in Vibrio parahaemolyticus.